We begin with the raw amino-acid sequence, 303 residues long: D-alanine--D-alanine ligase (303 aa).

The ATP-grasp domain maps to 104-300 (KLMWQAVGLP…FEKLVERVLE (197 aa)). 132-187 (IAKLGLPVFVKPSSEGSSVGVTKVKTVEQLLPAVEEALKFDSIVLVEAFLAGKEYS) contacts ATP. The Mg(2+) site is built by D254, E267, and N269.

It belongs to the D-alanine--D-alanine ligase family. The cofactor is Mg(2+). It depends on Mn(2+) as a cofactor.

It localises to the cytoplasm. The catalysed reaction is 2 D-alanine + ATP = D-alanyl-D-alanine + ADP + phosphate + H(+). Its pathway is cell wall biogenesis; peptidoglycan biosynthesis. Cell wall formation. The chain is D-alanine--D-alanine ligase from Actinobacillus pleuropneumoniae serotype 5b (strain L20).